A 161-amino-acid polypeptide reads, in one-letter code: Cell division control protein 31 (161 aa).

4 consecutive EF-hand domains span residues 20–55, 56–91, 93–128, and 129–161; these read EQKQEIYEAFSLFDMNNDGFLDYHELKVAMKALGFE, LPKREILDLIDEYDSEGRHLMKYDDFYIVMGEKILK, DPLDEIKRAFQLFDDDHTGKISIKNLRRVAKELGET, and LTDEELRAMIEEFDLDGDGEINENEFIAICTDS. Ca(2+) contacts are provided by D33, N35, D37, and E44. Position 130 is a phosphothreonine (T130). D142, D144, D146, E148, and E153 together coordinate Ca(2+).

The protein belongs to the centrin family. Component of the spindle pole body (SPB), acting as the connector of microtubule arrays in the cytoplasm and the nucleoplasm, is involved in nuclear positioning before chromosome segregation, SPB separation, spindle formation, chromosome segregation, nuclear migration into the bud, nuclear reorientation after cytokinesis and nuclear fusion during conjugation. The SPB half-bridge, which is tightly associated with the cytoplasmic side of the nuclear envelope and the SPB, is playing a key role as the starting structure for and in the initiation of SPB duplication in G1. At the SPB half-bridge CDC31 interacts with KAR1, MPS3 and SFI1. Interacts with KIC1. Interacts with VPS13. Associates with nuclear pore complexes (NPCs).

The protein localises to the nucleus envelope. The protein resides in the cytoplasm. Its subcellular location is the cytoskeleton. It is found in the microtubule organizing center. It localises to the spindle pole body. Functionally, functions as a component of the spindle pole body (SPB) half-bridge. At the SPB, it is recruited by KAR1 and MPS3 to the SPB half-bridge and involved in the initial steps of SPB duplication. Also involved in connection with the protein kinase KIC1 in the maintenance of cell morphology and integrity. May play a role in vesicle-mediated transport, in a VPS13-dependent manner. This chain is Cell division control protein 31 (CDC31), found in Saccharomyces cerevisiae (strain ATCC 204508 / S288c) (Baker's yeast).